We begin with the raw amino-acid sequence, 327 residues long: MTHSLRVIFAGTPEFAAAALAAIHEAGFPVPLVLTQPDRPAGRGMKLQASAVKRYAFERGMAVAQPPSLRRAGKYPAEAVAALDLLHATPHDVMVVAAYGLLLPQEVLELPRHGCINIHASLLPRWRGAAPIHRAIEAGDAETGVTLMQMDAGLDTGAMLHEARVAIAPDDTTATLHDKLAAAGARLVVDALVELERTGALAATPQPADGVTYAEKIGKHEAALDWRKPAAALARQVRAFDPFPGGAGTLDGATLKLWAADAVPGRDDAAPGTIVDIGPDGVVIACGEGALRVTQLQKPGGKRLPAREFLAGAPLAVGQRFAPADAA.

121–124 (SLLP) contacts (6S)-5,6,7,8-tetrahydrofolate.

It belongs to the Fmt family.

It carries out the reaction L-methionyl-tRNA(fMet) + (6R)-10-formyltetrahydrofolate = N-formyl-L-methionyl-tRNA(fMet) + (6S)-5,6,7,8-tetrahydrofolate + H(+). Attaches a formyl group to the free amino group of methionyl-tRNA(fMet). The formyl group appears to play a dual role in the initiator identity of N-formylmethionyl-tRNA by promoting its recognition by IF2 and preventing the misappropriation of this tRNA by the elongation apparatus. The polypeptide is Methionyl-tRNA formyltransferase (Burkholderia pseudomallei (strain 1710b)).